A 671-amino-acid polypeptide reads, in one-letter code: NADH-quinone oxidoreductase subunit G (671 aa).

Residues 1 to 78 (MIKLNIDGSE…GMVIHTDTPM (78 aa)) form the 2Fe-2S ferredoxin-type domain. Residues cysteine 34, cysteine 45, cysteine 48, and cysteine 62 each contribute to the [2Fe-2S] cluster site. The region spanning 78–117 (MVKKAREGVMEFLLINHPLDCPICDQGGECDLQDQAFRYG) is the 4Fe-4S His(Cys)3-ligated-type domain. 8 residues coordinate [4Fe-4S] cluster: histidine 94, cysteine 98, cysteine 101, cysteine 107, cysteine 146, cysteine 149, cysteine 152, and cysteine 196. Residues 215–271 (LKHTASIGVHDAEGSNIRIDSRGDEVMRILPRVNEEINEEWLSDKNRFSYDGLKYQR) form the 4Fe-4S Mo/W bis-MGD-type domain.

This sequence belongs to the complex I 75 kDa subunit family. The cofactor is [2Fe-2S] cluster. [4Fe-4S] cluster is required as a cofactor.

The catalysed reaction is a quinone + NADH + 5 H(+)(in) = a quinol + NAD(+) + 4 H(+)(out). Functionally, NDH-1 shuttles electrons from NADH, via FMN and iron-sulfur (Fe-S) centers, to quinones in the respiratory chain. Couples the redox reaction to proton translocation (for every two electrons transferred, four hydrogen ions are translocated across the cytoplasmic membrane), and thus conserves the redox energy in a proton gradient. The sequence is that of NADH-quinone oxidoreductase subunit G (nuoG) from Rickettsia felis (strain ATCC VR-1525 / URRWXCal2) (Rickettsia azadi).